A 95-amino-acid chain; its full sequence is Alpha-conotoxin GeXXA (95 aa).

The first 21 residues, 1–21, serve as a signal peptide directing secretion; it reads MPKQEKMMLVLLILPLPYCNA. Positions 22-45 are excised as a propeptide; that stretch reads AGVTTVQWGGHGDGLDRYLQRGVR. Disulfide bonds link Cys64–Cys73, Cys69–Cys81, Cys74–Cys91, and Cys79–Cys93.

Belongs to the conotoxin D superfamily. In terms of assembly, homodimer. Pseudo-homodimer (identical sequence, different post-translational modifications). In terms of tissue distribution, expressed by the venom duct.

Its subcellular location is the secreted. In terms of biological role, alpha-D-conopeptides act as non-competitive inhibitors of nicotinic acetylcholine receptors (nAChR). Through its two C-terminal domains, this homodimeric protein would bind to two nAChR allosteric sites, located outside the nAChR C-loop of the principal binding face and at the adjacent binding interface in a clockwise direction. This toxin has strong inhibitory activity on rat alpha-9-alpha-10 (CHRNA9-CHRNA10) (IC(50)=1.2 nM) and a moderate inhibitory activity on human alpha-7 (CHRNA7) (IC(50)=210 nM), rat alpha-3-beta-2 (CHRNA3-CHRNB2) (IC(50)=498 nM), rat alpha-3-beta-4 (CHRNA3-CHRNB4) (IC(50)=614 nM) and rat alpha-1-beta-1-delta-epsilon (CHRNA1-CHRNB1-CHRNE-CHRND) (IC(50)=743 nM) subtypes. Shows a weaker inhibitory activity on human alpha-9-alpha-10 (IC(50)=28 nM) than on the rat channel. This is explained by a different residue in the probable binding site (His-31 in rat alpha-10 and Leu-31 in human). The protein is Alpha-conotoxin GeXXA of Conus generalis (General cone).